Here is a 130-residue protein sequence, read N- to C-terminus: Small ribosomal subunit protein uS9 (130 aa).

It belongs to the universal ribosomal protein uS9 family.

The sequence is that of Small ribosomal subunit protein uS9 from Bacillus thuringiensis subsp. konkukian (strain 97-27).